Consider the following 518-residue polypeptide: T-box transcription factor TBX5 (518 aa).

A disordered region spans residues 1-46 (MADTDEGFGLARTPLEPDSKDRSCDSKPESALGAPSKSPSSPQAAF). A compositionally biased stretch (basic and acidic residues) spans 15 to 28 (LEPDSKDRSCDSKP). Over residues 34-45 (APSKSPSSPQAA) the composition is skewed to low complexity. Positions 58–238 (LHERELWLKF…NNPFAKGFRG (181 aa)) form a DNA-binding region, T-box. Disordered regions lie at residues 254-307 (EYPV…LLPP) and 330-352 (ECSSTEHPYKKPYMETSPSEEDT). Positions 269 to 301 (SNHSPFSSETRALSTSSNLGSQYQCENGVSGPS) are enriched in polar residues. N6-acetyllysine is present on lysine 339.

Monomer. Homodimer (via the T-box); binds DNA as homodimer. Interacts (via the T-box) with NKX2-5 (via the homeobox); this complex binds DNA. Interacts with GATA4. Interacts with KAT2A and KAT2B. In terms of processing, acetylation at Lys-339 by KAT2A and KAT2B promotes nuclear retention.

Its subcellular location is the nucleus. The protein localises to the cytoplasm. Functionally, DNA-binding protein that regulates the transcription of several genes and is involved in heart development and limb pattern formation. Binds to the core DNA motif of NPPA promoter. The chain is T-box transcription factor TBX5 (Tbx5) from Mus musculus (Mouse).